We begin with the raw amino-acid sequence, 139 residues long: Large-conductance mechanosensitive channel (139 aa).

Transmembrane regions (helical) follow at residues 9 to 29 and 79 to 99; these read AFAV…GAAF and IQTV…VKAI.

The protein belongs to the MscL family. Homopentamer.

Its subcellular location is the cell inner membrane. In terms of biological role, channel that opens in response to stretch forces in the membrane lipid bilayer. May participate in the regulation of osmotic pressure changes within the cell. The sequence is that of Large-conductance mechanosensitive channel from Pseudomonas putida (strain W619).